The following is a 76-amino-acid chain: DNA-directed RNA polymerase subunit epsilon (76 aa).

The protein belongs to the RNA polymerase subunit epsilon family. In terms of assembly, RNAP is composed of a core of 2 alpha, a beta and a beta' subunit. The core is associated with a delta subunit, and at least one of epsilon or omega. When a sigma factor is associated with the core the holoenzyme is formed, which can initiate transcription.

The enzyme catalyses RNA(n) + a ribonucleoside 5'-triphosphate = RNA(n+1) + diphosphate. In terms of biological role, a non-essential component of RNA polymerase (RNAP). The protein is DNA-directed RNA polymerase subunit epsilon of Lactococcus lactis subsp. cremoris (strain MG1363).